The primary structure comprises 248 residues: Probable transcriptional regulatory protein Dde_2325 (248 aa).

Basic residues predominate over residues 1-15 (MAGHSKWKNIQHRKG). Residues 1-22 (MAGHSKWKNIQHRKGRQDAKKS) form a disordered region.

The protein belongs to the TACO1 family.

It is found in the cytoplasm. This Oleidesulfovibrio alaskensis (strain ATCC BAA-1058 / DSM 17464 / G20) (Desulfovibrio alaskensis) protein is Probable transcriptional regulatory protein Dde_2325.